Here is a 168-residue protein sequence, read N- to C-terminus: Large ribosomal subunit protein uL16 (168 aa).

The protein belongs to the universal ribosomal protein uL16 family.

In Thermofilum pendens (strain DSM 2475 / Hrk 5), this protein is Large ribosomal subunit protein uL16.